Consider the following 473-residue polypeptide: Ribulose bisphosphate carboxylase large chain 1 (473 aa).

Positions 116 and 166 each coordinate substrate. The active-site Proton acceptor is the Lys168. Lys170 is a binding site for substrate. Residues Lys194, Asp196, and Glu197 each contribute to the Mg(2+) site. The residue at position 194 (Lys194) is an N6-carboxylysine. The Proton acceptor role is filled by His287. Arg288, His320, and Ser372 together coordinate substrate.

The protein belongs to the RuBisCO large chain family. Type I subfamily. As to quaternary structure, heterohexadecamer of 8 large chains and 8 small chains. Mg(2+) serves as cofactor.

The enzyme catalyses 2 (2R)-3-phosphoglycerate + 2 H(+) = D-ribulose 1,5-bisphosphate + CO2 + H2O. It carries out the reaction D-ribulose 1,5-bisphosphate + O2 = 2-phosphoglycolate + (2R)-3-phosphoglycerate + 2 H(+). Functionally, ruBisCO catalyzes two reactions: the carboxylation of D-ribulose 1,5-bisphosphate, the primary event in carbon dioxide fixation, as well as the oxidative fragmentation of the pentose substrate. Both reactions occur simultaneously and in competition at the same active site. The protein is Ribulose bisphosphate carboxylase large chain 1 of Acidithiobacillus ferrooxidans (Thiobacillus ferrooxidans).